The primary structure comprises 95 residues: Aspartyl/glutamyl-tRNA(Asn/Gln) amidotransferase subunit C (95 aa).

The protein belongs to the GatC family. In terms of assembly, heterotrimer of A, B and C subunits.

It carries out the reaction L-glutamyl-tRNA(Gln) + L-glutamine + ATP + H2O = L-glutaminyl-tRNA(Gln) + L-glutamate + ADP + phosphate + H(+). It catalyses the reaction L-aspartyl-tRNA(Asn) + L-glutamine + ATP + H2O = L-asparaginyl-tRNA(Asn) + L-glutamate + ADP + phosphate + 2 H(+). Functionally, allows the formation of correctly charged Asn-tRNA(Asn) or Gln-tRNA(Gln) through the transamidation of misacylated Asp-tRNA(Asn) or Glu-tRNA(Gln) in organisms which lack either or both of asparaginyl-tRNA or glutaminyl-tRNA synthetases. The reaction takes place in the presence of glutamine and ATP through an activated phospho-Asp-tRNA(Asn) or phospho-Glu-tRNA(Gln). This Prochlorococcus marinus (strain NATL2A) protein is Aspartyl/glutamyl-tRNA(Asn/Gln) amidotransferase subunit C.